The primary structure comprises 559 residues: Potassium-transporting ATPase potassium-binding subunit (559 aa).

Transmembrane regions (helical) follow at residues 7 to 27 (LLIASFLLILLVLAKPLGSGL), 63 to 83 (LLALLTLNLLGLSILFCLLFW), 132 to 152 (GLTVQNFLSAATGIAVVFALI), 170 to 190 (LVRITLWILFPVALIIALFFI), 253 to 273 (MVQMLAIFLIPAALCFAFGEA), 283 to 303 (LLWAMSFIFVVCVAVVMWAEV), 327 to 347 (FGVLASSLFAVVTTAASCGAV), 356 to 376 (ALGGMVPMWLMQIGEVVFGGV), 379 to 399 (GLYGMLLFVLLAVFIAGLMIG), 416 to 436 (MTALAILVTPMLVLLGSALAM), 484 to 504 (LLAFCMFVGRFGVIIPVMAIA), and 524 to 544 (GALFIGLLIGTVLLVGALTFI).

The protein belongs to the KdpA family. As to quaternary structure, the system is composed of three essential subunits: KdpA, KdpB and KdpC.

It is found in the cell inner membrane. In terms of biological role, part of the high-affinity ATP-driven potassium transport (or Kdp) system, which catalyzes the hydrolysis of ATP coupled with the electrogenic transport of potassium into the cytoplasm. This subunit binds the periplasmic potassium ions and delivers the ions to the membrane domain of KdpB through an intramembrane tunnel. In Salmonella arizonae (strain ATCC BAA-731 / CDC346-86 / RSK2980), this protein is Potassium-transporting ATPase potassium-binding subunit.